The chain runs to 398 residues: tRNA(Ile)-lysidine synthase (398 aa).

Residue 25–30 coordinates ATP; sequence SGGVDS.

Belongs to the tRNA(Ile)-lysidine synthase family.

It localises to the cytoplasm. The catalysed reaction is cytidine(34) in tRNA(Ile2) + L-lysine + ATP = lysidine(34) in tRNA(Ile2) + AMP + diphosphate + H(+). Its function is as follows. Ligates lysine onto the cytidine present at position 34 of the AUA codon-specific tRNA(Ile) that contains the anticodon CAU, in an ATP-dependent manner. Cytidine is converted to lysidine, thus changing the amino acid specificity of the tRNA from methionine to isoleucine. The protein is tRNA(Ile)-lysidine synthase of Francisella tularensis subsp. novicida (strain U112).